The primary structure comprises 485 residues: Glutamate--tRNA ligase (485 aa).

The 'HIGH' region signature appears at 11–21 (PSPTGYMHVGN). Zn(2+)-binding residues include cysteine 108, cysteine 110, cysteine 135, and aspartate 137. The 'KMSKS' region motif lies at 252–256 (KLSKR). Position 255 (lysine 255) interacts with ATP.

It belongs to the class-I aminoacyl-tRNA synthetase family. Glutamate--tRNA ligase type 1 subfamily. In terms of assembly, monomer. Zn(2+) is required as a cofactor.

The protein localises to the cytoplasm. The catalysed reaction is tRNA(Glu) + L-glutamate + ATP = L-glutamyl-tRNA(Glu) + AMP + diphosphate. Its function is as follows. Catalyzes the attachment of glutamate to tRNA(Glu) in a two-step reaction: glutamate is first activated by ATP to form Glu-AMP and then transferred to the acceptor end of tRNA(Glu). This is Glutamate--tRNA ligase from Clostridium botulinum (strain Loch Maree / Type A3).